Here is a 364-residue protein sequence, read N- to C-terminus: MQERHTEQDYRALLIADTPIIDVRAPIEFEQGAMPAAINLPLMNNDERAAVGTCYKQQGSDAALALGHKLVAGEIRQQRMDAWRAACLQNPQGILCCARGGQRSHIVQSWLYAAGIDYPLVEGGYKALRQTAIQATIELAQKPIVLIGGCTGSGKTLLVQQQPNGVDLEGLARHRGSAFGRTLQPQLSQASFENLLAAEMLKTDARQNLRLWVLEDESRMIGSNHLPECLRERMTQAAIAVVEDPFEIRLERLNEEYFLRMHHDFTHAYGDEQGWQEYCEYLHHGLSAIKRRLGLQRYNELAAQLDTALTTQLTTGSTDGHLAWLVPLLKEYYDPMYRYQLEKKAEKVVFRGEWAEVAEWVKAR.

Positions 14–137 constitute a Rhodanese domain; sequence LIADTPIIDV…LRQTAIQATI (124 aa). Residue cysteine 97 is the S-selanylcysteine intermediate of the active site.

The protein belongs to the SelU family. Monomer.

The catalysed reaction is 5-methylaminomethyl-2-thiouridine(34) in tRNA + selenophosphate + (2E)-geranyl diphosphate + H2O + H(+) = 5-methylaminomethyl-2-selenouridine(34) in tRNA + (2E)-thiogeraniol + phosphate + diphosphate. It catalyses the reaction 5-methylaminomethyl-2-thiouridine(34) in tRNA + (2E)-geranyl diphosphate = 5-methylaminomethyl-S-(2E)-geranyl-thiouridine(34) in tRNA + diphosphate. The enzyme catalyses 5-methylaminomethyl-S-(2E)-geranyl-thiouridine(34) in tRNA + selenophosphate + H(+) = 5-methylaminomethyl-2-(Se-phospho)selenouridine(34) in tRNA + (2E)-thiogeraniol. It carries out the reaction 5-methylaminomethyl-2-(Se-phospho)selenouridine(34) in tRNA + H2O = 5-methylaminomethyl-2-selenouridine(34) in tRNA + phosphate. Involved in the post-transcriptional modification of the uridine at the wobble position (U34) of tRNA(Lys), tRNA(Glu) and tRNA(Gln). Catalyzes the conversion of 2-thiouridine (S2U-RNA) to 2-selenouridine (Se2U-RNA). Acts in a two-step process involving geranylation of 2-thiouridine (S2U) to S-geranyl-2-thiouridine (geS2U) and subsequent selenation of the latter derivative to 2-selenouridine (Se2U) in the tRNA chain. The sequence is that of tRNA 2-selenouridine synthase from Escherichia coli (strain SE11).